Here is a 494-residue protein sequence, read N- to C-terminus: Cytochrome P450 2C23 (494 aa).

A Phosphoserine modification is found at serine 131. N6-acetyllysine occurs at positions 253 and 379. A heme-binding site is contributed by cysteine 439.

It belongs to the cytochrome P450 family. The cofactor is heme. As to expression, expressed in kidney and liver. Expressed in cortical tubules of kidney (at protein level).

It is found in the endoplasmic reticulum membrane. The protein localises to the microsome membrane. It carries out the reaction (5Z,8Z,11Z,14Z)-eicosatetraenoate + reduced [NADPH--hemoprotein reductase] + O2 = (8R,9S)-epoxy-(5Z,11Z,14Z)-eicosatrienoate + oxidized [NADPH--hemoprotein reductase] + H2O + H(+). It catalyses the reaction (5Z,8Z,11Z,14Z)-eicosatetraenoate + reduced [NADPH--hemoprotein reductase] + O2 = (11R,12S)-epoxy-(5Z,8Z,14Z)-eicosatrienoate + oxidized [NADPH--hemoprotein reductase] + H2O + H(+). The catalysed reaction is (5Z,8Z,11Z,14Z)-eicosatetraenoate + reduced [NADPH--hemoprotein reductase] + O2 = (11S,12R)-epoxy-(5Z,8Z,14Z)-eicosatrienoate + oxidized [NADPH--hemoprotein reductase] + H2O + H(+). The enzyme catalyses (5Z,8Z,11Z,14Z)-eicosatetraenoate + reduced [NADPH--hemoprotein reductase] + O2 = (14R,15S)-epoxy-(5Z,8Z,11Z)-eicosatrienoate + oxidized [NADPH--hemoprotein reductase] + H2O + H(+). It carries out the reaction (5Z,8Z,11Z,14Z)-eicosatetraenoate + reduced [NADPH--hemoprotein reductase] + O2 = (14S,15R)-epoxy-(5Z,8Z,11Z)-eicosatrienoate + oxidized [NADPH--hemoprotein reductase] + H2O + H(+). It catalyses the reaction (5Z,8Z,11Z,14Z,17Z)-eicosapentaenoate + reduced [NADPH--hemoprotein reductase] + O2 = 8,9-epoxy-(5Z,11Z,14Z,17Z)-eicosatetraenoate + oxidized [NADPH--hemoprotein reductase] + H2O + H(+). The catalysed reaction is (5Z,8Z,11Z,14Z,17Z)-eicosapentaenoate + reduced [NADPH--hemoprotein reductase] + O2 = 11,12-epoxy-(5Z,8Z,14Z,17Z)-eicosatetraenoate + oxidized [NADPH--hemoprotein reductase] + H2O + H(+). The enzyme catalyses (5Z,8Z,11Z,14Z,17Z)-eicosapentaenoate + reduced [NADPH--hemoprotein reductase] + O2 = 14,15-epoxy-(5Z,8Z,11Z,17Z)-eicosatetraenoate + oxidized [NADPH--hemoprotein reductase] + H2O + H(+). It carries out the reaction (5Z,8Z,11Z,14Z,17Z)-eicosapentaenoate + reduced [NADPH--hemoprotein reductase] + O2 = (17R,18S)-epoxy-(5Z,8Z,11Z,14Z)-eicosatetraenoate + oxidized [NADPH--hemoprotein reductase] + H2O + H(+). It catalyses the reaction (5Z,8Z,11Z,14Z,17Z)-eicosapentaenoate + reduced [NADPH--hemoprotein reductase] + O2 = (17S,18R)-epoxy-(5Z,8Z,11Z,14Z)-eicosatetraenoate + oxidized [NADPH--hemoprotein reductase] + H2O + H(+). The catalysed reaction is 20-hydroxy-(5Z,8Z,11Z,14Z)-eicosatetraenoate + reduced [NADPH--hemoprotein reductase] + O2 = 20-hydroxy-8,9-epoxy-(5Z,11Z,14Z)-eicosatrienoate + oxidized [NADPH--hemoprotein reductase] + H2O + H(+). It participates in lipid metabolism; arachidonate metabolism. In terms of biological role, a cytochrome P450 monooxygenase involved in polyunsaturated fatty acids (PUFAs) metabolism and signaling. Catalyzes preferentially the epoxidation of double bonds of PUFAs. Converts arachidonic acid (ARA, C20:4(n-6)) primarily to stereospecific products 8R,9S-, 11R,12S-, and 14S,15R-EET. Plays a major role in the formation of EETs and hydroxy-EETs (HEETs) in kidney. Via EETs may inhibit the epithelial sodium channels (ENaCs) in nephron segments, preventing excessive sodium absorption during high dietary salt intake. Participates in the formation of anti-inflammatory hydroxyepoxyeicosatrienoic acids (HEETs) by converting 20-hydroxyeicosatetraenoic acid (20-HETE) to 20,8,9-HEET, an activator of PPARA. Metabolizes eicosapentaenoic acid (EPA, C20:5(n-3)) to epoxyeicosatetraenoic acid (EETeTr) regioisomers, 8,9-, 11,12-, 14,15-, and 17,18-EETeTr, preferentially producing 17R,18S enantiomer. Mechanistically, uses molecular oxygen inserting one oxygen atom into a substrate, and reducing the second into a water molecule, with two electrons provided by NADPH via cytochrome P450 reductase (NADPH--hemoprotein reductase). This chain is Cytochrome P450 2C23, found in Rattus norvegicus (Rat).